Consider the following 168-residue polypeptide: Large ribosomal subunit protein uL10 (168 aa).

This sequence belongs to the universal ribosomal protein uL10 family. As to quaternary structure, part of the ribosomal stalk of the 50S ribosomal subunit. The N-terminus interacts with L11 and the large rRNA to form the base of the stalk. The C-terminus forms an elongated spine to which L12 dimers bind in a sequential fashion forming a multimeric L10(L12)X complex.

Forms part of the ribosomal stalk, playing a central role in the interaction of the ribosome with GTP-bound translation factors. The chain is Large ribosomal subunit protein uL10 from Clostridium acetobutylicum (strain ATCC 824 / DSM 792 / JCM 1419 / IAM 19013 / LMG 5710 / NBRC 13948 / NRRL B-527 / VKM B-1787 / 2291 / W).